The sequence spans 1113 residues: StAR-related lipid transfer protein 13 (1113 aa).

M1 is subject to N-acetylmethionine. The region spanning 55–122 (QQEIEAKEAC…LNKCASMKLD (68 aa)) is the SAM domain. Disordered regions lie at residues 162-254 (LLPR…PTRA) and 307-346 (PNGD…VSTP). Over residues 177-188 (MRNTTSSESVLT) the composition is skewed to polar residues. 2 stretches are compositionally biased toward low complexity: residues 197–213 (SIHS…SQPG) and 326–344 (SGKS…SGVS). S411 is modified (phosphoserine). The segment covering 536 to 549 (FEGNSVSEGRTTPS) has biased composition (polar residues). Residues 536-580 (FEGNSVSEGRTTPSDVERDVTSLNESEPPGVRDRRDSGVGASLTR) form a disordered region. The Rho-GAP domain maps to 663–868 (VPLIVHVQRT…HMIMECDRLF (206 aa)). The START domain maps to 899 to 1107 (LEESGATFHT…RNSFQPLIAE (209 aa)).

Homodimer. Interacts with TAX1BP1. As to expression, ubiquitously expressed. Underexpressed in hepatocellular carcinoma cells and some breast cancer cell lines.

The protein resides in the cytoplasm. It localises to the membrane. It is found in the mitochondrion membrane. The protein localises to the lipid droplet. GTPase-activating protein for RhoA, and perhaps for Cdc42. May be involved in regulation of cytoskeletal reorganization, cell proliferation and cell motility. Acts a tumor suppressor in hepatocellular carcinoma cells. The sequence is that of StAR-related lipid transfer protein 13 (STARD13) from Homo sapiens (Human).